We begin with the raw amino-acid sequence, 1064 residues long: Bifunctional cytochrome P450/NADPH--P450 reductase ascE (1064 aa).

Residues 1–484 form a cytochrome P450 region; the sequence is MTELIPGPKG…LHGGAKKGSK (484 aa). Residue Cys-411 participates in heme binding. Residues 485-1064 are NADPH-P-450 reductase; that stretch reads IDGPSSGASL…ANRYVTEIFA (580 aa). One can recognise a Flavodoxin-like domain in the interval 504–644; it reads MTILYGSDSG…DFERWQDDQL (141 aa). Residues 510-514 and 588-620 each bind FMN; these read SDSGT and VYGC…KRIA. One can recognise an FAD-binding FR-type domain in the interval 676 to 905; sequence VDADEATVQS…KPALRLFHPP (230 aa).

This sequence in the N-terminal section; belongs to the cytochrome P450 family. It depends on FAD as a cofactor. FMN is required as a cofactor. Heme serves as cofactor.

The catalysed reaction is ilicicolin A + NADPH + O2 + H(+) = ilicicolin A epoxide + NADP(+) + H2O. The protein operates within secondary metabolite biosynthesis; terpenoid biosynthesis. Its function is as follows. Bifunctional cytochrome P450/NADPH--P450 reductase; part of the asc-1 gene cluster that mediates the biosynthesis both ascochlorin and ascofuranone, a strong inhibitor of cyanide-insensitive alternative oxidases and a promising drug candidate against African trypanosomiasis. The first step in the pathway is performed by the non-reducing polyketide synthase ascC that produces orsellinic acid by condensing acetyl-CoA with 3 malonyl-CoA units. Orsellinic acid is then prenylated by the prenyltransferase ascA to yield ilicicolinic acid B. Ilicicolinic acid B is further reduced to ilicicolin B by the reductase ascB. The halogenase ascD then chlorinates ilicicolin B to produce ilicicolin A which is converted to ilicicolin A epoxide by the cytochrome P450 monooxygenase ascE that catalyzes stereoselective epoxidation of the terminal double bond of the prenyl group. Ilicicolin A epoxide is the last common precursor for the biosynthesis of ascofuranone and ascochlorin. The terpene cyclase ascF produces a monocyclic terpene, and the cyclization reaction is proposed to be initiated by protonation of the terminal epoxide of ilicicolin A epoxide to generate a monocyclic tertiarycation, which is followed by a series of hydride and methyl shifts with abstraction of proton, leading to the formation of the (14S,15R,19R)-trimethylcyclohexanone ring structure of ilicicolin C, which is finally reduced to ascochlorin by the dehydrogenase ascG. On the other hand, ilicicolin A epoxide is hydroxylated by the cytochrome P450 monooxygenase ascH, and the resultant product is cyclized by the terpene cyclase ascI to ascofuranol via protonation-initiated epoxide ring opening, which facilitates the 6-endo-tet cyclization to form the tetrahy-drofuran ring. Finally, ascofuranol is oxidized into ascofuranone by ascJ. This Acremonium egyptiacum (Oospora egyptiaca) protein is Bifunctional cytochrome P450/NADPH--P450 reductase ascE.